Consider the following 245-residue polypeptide: 8-amino-3,8-dideoxy-manno-octulosonate cytidylyltransferase (245 aa).

This sequence belongs to the KdsB family.

It is found in the cytoplasm. The catalysed reaction is 8-amino-3,8-dideoxy-alpha-D-manno-octulosonate + CTP = CMP-8-amino-3,8-dideoxy-alpha-D-manno-oct-2-ulosonate + diphosphate. The protein operates within bacterial outer membrane biogenesis; lipopolysaccharide biosynthesis. Activates KDO8N (a required 8-carbon sugar) for incorporation into bacterial lipopolysaccharide in the Shewanella genus. This chain is 8-amino-3,8-dideoxy-manno-octulosonate cytidylyltransferase, found in Shewanella halifaxensis (strain HAW-EB4).